An 848-amino-acid chain; its full sequence is Protein MEI2-like 2 (848 aa).

2 consecutive RRM domains span residues 197 to 270 (RTLF…FSIP) and 282 to 355 (GTLV…PSRP). Disordered regions lie at residues 370 to 400 (IDQDEPRSYRIPHVGSPIASSPPGAWAQYSS), 455 to 523 (NQPH…SQGQ), and 826 to 848 (ATGDPFGNEEDNNQNERTAGEEL).

Functionally, probable RNA-binding protein that may play a role in growth regulation. This chain is Protein MEI2-like 2 (ML2), found in Oryza sativa subsp. japonica (Rice).